Consider the following 533-residue polypeptide: Metal transporter nramp1 homolog (533 aa).

The segment at 1 to 33 is disordered; that stretch reads MTPRIESEESAPLVNKNNNNNNDNNNNNNVDEE. Topologically, residues 1–68 are cytoplasmic; the sequence is MTPRIESEES…PNIDKPDSKW (68 aa). A compositionally biased stretch (low complexity) spans 14 to 29; sequence VNKNNNNNNDNNNNNN. The helical transmembrane segment at 69 to 89 threads the bilayer; it reads INFKTLWAFTGPGFLMSIAYL. Residues 90-101 are Extracellular-facing; sequence DPGNLESDIQAG. A helical membrane pass occupies residues 102 to 122; that stretch reads AMAGYQLLWVLFWSTVIGFWL. Over 123 to 158 the chain is Cytoplasmic; it reads QMLASRLGVVTGKHLAEHCREQYPKTPRLLLWLMTE. Residues 159–179 form a helical membrane-spanning segment; it reads LAIIGSDIQEVIGTAIALQIL. Over 180 to 182 the chain is Extracellular; sequence SNG. Residues 183–203 form a helical membrane-spanning segment; the sequence is HIPLWAGVLFTAADTFTFLFL. The Cytoplasmic portion of the chain corresponds to 204–212; that stretch reads EKYGIRKLE. The helical transmembrane segment at 213–233 threads the bilayer; that stretch reads AFFCSLIAIMAISFGVEYIIS. Over 234-256 the chain is Extracellular; the sequence is KPDQIEVVKGVFIPLCSQNNISQ. N-linked (GlcNAc...) asparagine glycosylation is present at Asn-253. The chain crosses the membrane as a helical span at residues 257-277; that stretch reads AVGILGAVVMPHNIYLHSALV. Residues 278–302 lie on the Cytoplasmic side of the membrane; the sequence is QSREIDRKSETQVKIANKYNRLESA. The helical transmembrane segment at 303-323 threads the bilayer; the sequence is FALIISFIINLLLVSVFAKGF. The Extracellular segment spans residues 324–348; it reads YGETTEIGLSSAADFLMDKYGKVAK. The helical transmembrane segment at 349-368 threads the bilayer; it reads YIWAIGLFSAGQCSTMTGTY. At 369–387 the chain is on the cytoplasmic side; the sequence is SGQFVMEGFLKLKIAPWKR. Residues 388-408 form a helical membrane-spanning segment; it reads LLITRCTAIVPAMVVAILSTS. At 409-415 the chain is on the extracellular side; the sequence is HLDSLDQ. The chain crosses the membrane as a helical span at residues 416–436; it reads WLNILQSIQLPFAVVPVLLFT. Residues 437–457 lie on the Cytoplasmic side of the membrane; sequence SSEKIMGSKFKNHWLNNQFVR. Residues 458–478 form a helical membrane-spanning segment; sequence FLSLLIIAINIYLIITFSMQI. The Extracellular segment spans residues 479 to 481; sequence SES. A helical membrane pass occupies residues 482–502; that stretch reads AWMISIVSISFFFYFIFIVYL. The Cytoplasmic portion of the chain corresponds to 503-533; that stretch reads SMGQENFNSMTKKIKNLFNNNSNQTYNNINY.

It belongs to the NRAMP family.

It is found in the membrane. In terms of biological role, depletes iron from the phagolysosome in an ATP-dependent process. May rather act as a symporter of protons and metal cations in an ATP-dependent process. Nramp1 overexpression protected cells from L.pneumophila infection. This chain is Metal transporter nramp1 homolog (nramp1), found in Dictyostelium discoideum (Social amoeba).